Consider the following 300-residue polypeptide: MSAASSTESVTPALKAEILAEALPYIKRFFDKTIVIKYGGNAMTDPHLKDCFARDVVLLKLVGLNPVVVHGGGPQIETLLAKVGKKGEFVQGMRVTDAETMEVVEMVLGGQVNKEIVNLINQAGGKAVGLTGKDASFIRAKKLLMQKLDAPAGDVIDVGQVGEITTIDPSLISFLDQGDFIPVIAPIGVGDNGETYNINADVVAGKLAEILKAEKLVLLTNTPGVLDKAGNLLTGLTPRQIDDLVADGTLSGGMLPKIGSALDAARNGVKSVHIIDGRVEHCLLLEILTDHGVGTMIKSK.

Residues 72–73, Arg94, and Asn197 contribute to the substrate site; that span reads GG.

This sequence belongs to the acetylglutamate kinase family. ArgB subfamily.

The protein resides in the cytoplasm. It carries out the reaction N-acetyl-L-glutamate + ATP = N-acetyl-L-glutamyl 5-phosphate + ADP. Its pathway is amino-acid biosynthesis; L-arginine biosynthesis; N(2)-acetyl-L-ornithine from L-glutamate: step 2/4. In terms of biological role, catalyzes the ATP-dependent phosphorylation of N-acetyl-L-glutamate. The chain is Acetylglutamate kinase from Azoarcus sp. (strain BH72).